A 372-amino-acid polypeptide reads, in one-letter code: Pyruvylated Gal-beta-1,3-epitope synthesis protein 5 (372 aa).

Topologically, residues 1-12 (MGLPLRIFAGNG) are cytoplasmic. The chain crosses the membrane as a helical; Signal-anchor for type II membrane protein span at residues 13-35 (IGGWCLRLFLFGSLILLLRPLIF). At 36-372 (YSNTTMKKLK…LRIIEQWKQL (337 aa)) the chain is on the lumenal side. N-linked (GlcNAc...) asparagine glycosylation is found at Asn38 and Asn128.

It localises to the golgi apparatus membrane. Its function is as follows. Involved in cell wall biogenesis. Has a role in the addition of Gal-beta1,3 moeities to galactomannans and their subsequent pyruvylation. Has a role in meiosis. This is Pyruvylated Gal-beta-1,3-epitope synthesis protein 5 (pvg5) from Schizosaccharomyces pombe (strain 972 / ATCC 24843) (Fission yeast).